The chain runs to 268 residues: MNAFDRARQSAIAAAREARGTYRNGLVTPTAGVAPGMTQANLIALPRDWAYDFLLYAQRNPKACPILDVSDAGSPTTLLAEGSDLRTDIPMYRIWRDGKLAEEVSDATQAWAEHDDMVAFLIGCSFTFETPLQEAGIEVRHITDGCNVPMYRTNRACRPAGRLHGEMVVSMRPIPADRVAEASAISGRYPSVHGAPVHIGEPGRLGINDLSRPDFGDAVSIKPGEVPVFWACGVTPQAAVMASGVPFAITHSPGYMFITDVPDSTYHV.

The protein belongs to the D-glutamate cyclase family.

The chain is Putative hydro-lyase PSPTO_5379 from Pseudomonas syringae pv. tomato (strain ATCC BAA-871 / DC3000).